Consider the following 389-residue polypeptide: Nucleic acid dioxygenase ALKBH1 (389 aa).

The tract at residues 1–127 (MGKMAAAVAS…CLKLYSQKPN (127 aa)) is interaction with DNAJB6. The interval 86–389 (SKWRAYGLEG…VKRKRLNPNS (304 aa)) is tRNA-binding. Substrate is bound by residues W144 and 175–177 (YHY). The Fe2OG dioxygenase domain maps to 213 to 347 (QAEAGILNYY…RVNMTVRQVL (135 aa)). Position 220–222 (220–222 (NYY)) interacts with 2-oxoglutarate. Residues H231, D233, and H287 each coordinate Fe cation. D233 lines the substrate pocket. 338–344 (RVNMTVR) serves as a coordination point for 2-oxoglutarate.

Monomer. Interacts with DNAJB6. It depends on Fe(2+) as a cofactor. In adult organs, highly expressed in testis, eye, brain and kidney.

Its subcellular location is the nucleus. The enzyme catalyses an N(6)-methyl-2'-deoxyadenosine in DNA + 2-oxoglutarate + O2 = a 2'-deoxyadenosine in DNA + formaldehyde + succinate + CO2. The catalysed reaction is 2'-deoxyribonucleotide-(2'-deoxyribose 5'-phosphate)-2'-deoxyribonucleotide-DNA = a 3'-end 2'-deoxyribonucleotide-(2,3-dehydro-2,3-deoxyribose 5'-phosphate)-DNA + a 5'-end 5'-phospho-2'-deoxyribonucleoside-DNA + H(+). It catalyses the reaction a methylated nucleobase within DNA + 2-oxoglutarate + O2 = a nucleobase within DNA + formaldehyde + succinate + CO2. It carries out the reaction an N(1)-methyladenosine in tRNA + 2-oxoglutarate + O2 = an adenosine in tRNA + formaldehyde + succinate + CO2. The enzyme catalyses 5-methylcytidine(34) in mitochondrial tRNA(Met) + 2 2-oxoglutarate + 2 O2 = 5-formylcytidine(34) in mitochondrial tRNA(Met) + 2 succinate + 2 CO2 + H2O. The catalysed reaction is an N(3)-methylcytidine in mRNA + 2-oxoglutarate + O2 = a cytidine in mRNA + formaldehyde + succinate + CO2. It catalyses the reaction N(1)-methyladenosine(58) in tRNA + 2-oxoglutarate + O2 = adenosine(58) in tRNA + formaldehyde + succinate + CO2. Dioxygenase that acts on nucleic acids, such as DNA and tRNA. Requires molecular oxygen, alpha-ketoglutarate and iron. A number of activities have been described for this dioxygenase, but recent results suggest that it mainly acts on tRNAs and mediates their demethylation or oxidation depending on the context and subcellular compartment. Mainly acts as a tRNA demethylase by removing N(1)-methyladenine from various tRNAs, with a preference for N(1)-methyladenine at position 58 (m1A58) present on a stem loop structure of tRNAs. Acts as a regulator of translation initiation and elongation in response to glucose deprivation: regulates both translation initiation, by mediating demethylation of tRNA(Met), and translation elongation, N(1)-methyladenine-containing tRNAs being preferentially recruited to polysomes to promote translation elongation. In mitochondrion, specifically interacts with mt-tRNA(Met) and mediates oxidation of mt-tRNA(Met) methylated at cytosine(34) to form 5-formylcytosine (f(5)c) at this position. mt-tRNA(Met) containing the f(5)c modification at the wobble position enables recognition of the AUA codon in addition to the AUG codon, expanding codon recognition in mitochondrial translation. Specifically demethylates DNA methylated on the 6th position of adenine (N(6)-methyladenosine) DNA. N(6)-methyladenosine (m6A) DNA is present at some L1 elements in embryonic stem cells and probably promotes their silencing. Demethylates mRNAs containing N(3)-methylcytidine modification. Also able to repair alkylated single-stranded DNA by oxidative demethylation, but with low activity. Also has DNA lyase activity and introduces double-stranded breaks at abasic sites: cleaves both single-stranded DNA and double-stranded DNA at abasic sites, with the greatest activity towards double-stranded DNA with two abasic sites. DNA lyase activity does not require alpha-ketoglutarate and iron and leads to the formation of an irreversible covalent protein-DNA adduct with the 5' DNA product. DNA lyase activity is not required during base excision repair and class switch recombination of the immunoglobulin heavy chain during B lymphocyte activation. May play a role in placental trophoblast lineage differentiation. This is Nucleic acid dioxygenase ALKBH1 from Mus musculus (Mouse).